The sequence spans 165 residues: UPF0763 protein NIS_0363 (165 aa).

It belongs to the UPF0763 family.

This chain is UPF0763 protein NIS_0363, found in Nitratiruptor sp. (strain SB155-2).